The primary structure comprises 254 residues: Mitochondrial cardiolipin hydrolase (254 aa).

The Mitochondrial intermembrane segment spans residues 1-9; the sequence is MERFRWQVA. The interval 1–43 is required for mitochondrial localization; sequence MERFRWQVAAVAAVGLALALEALPSVLCWLRAGRRQQQRPPRR. A helical transmembrane segment spans residues 10-32; sequence AVAAVGLALALEALPSVLCWLRA. The Cytoplasmic segment spans residues 33-254; the sequence is GRRQQQRPPR…SKCSHHLSQV (222 aa). The segment at 49–82 adopts a C3H1-type; atypical zinc-finger fold; that stretch reads PSQVTCTEALLQAPGEAPSGPPAGCRCSLPHGES. The region spanning 155–182 is the PLD phosphodiesterase domain; it reads DLGYMHHKFAIVDKKVLITGSLNWTTQA. Active-site residues include H160, K162, and D167.

Belongs to the phospholipase D family. MitoPLD/Zucchini subfamily. As to quaternary structure, homodimer. Interacts with MOV10L1. Interacts with MIGA1 and MIGA2; possibly facilitating homodimer formation. Interacts with GK2.

It is found in the mitochondrion outer membrane. Its subcellular location is the nucleus membrane. The protein localises to the cell membrane. The protein resides in the golgi apparatus. The enzyme catalyses a cardiolipin + H2O = a 1,2-diacyl-sn-glycero-3-phospho-(1'-sn-glycerol) + a 1,2-diacyl-sn-glycero-3-phosphate + H(+). Single stranded DNA (ssDNA) hydrolase activity does not depend upon, but is stimulated by the presence of Ca(2+) and Mn(2+). MIGA1 and MIGA2 increase PLD6 self-association affinity and affects the homodimer conformation facilitating its phospholipase activity over the nuclease activity. MYC induces its expression and stimulates its phospholipase activity. Its function is as follows. Presents phospholipase and nuclease activities, depending on the different physiological conditions. Interaction with Mitoguardin (MIGA1 or MIGA2) affects the dimer conformation, facilitating the lipase activity over the nuclease activity. Plays a key role in mitochondrial fusion and fission via its phospholipase activity. In its phospholipase role, it uses the mitochondrial lipid cardiolipin as substrate to generate phosphatidate (PA or 1,2-diacyl-sn-glycero-3-phosphate), a second messenger signaling lipid. Production of PA facilitates Mitofusin-mediated fusion, whereas the cleavage of PA by the Lipin family of phosphatases produces diacylgycerol (DAG) which promotes mitochondrial fission. Both Lipin and DAG regulate mitochondrial dynamics and membrane fusion/fission, important processes for adapting mitochondrial metabolism to changes in cell physiology. Mitochondrial fusion enables cells to cope with the increased nucleotide demand during DNA synthesis. Mitochondrial function and dynamics are closely associated with biological processes such as cell growth, proliferation, and differentiation. Mediator of MYC activity, promotes mitochondrial fusion and activates AMPK which in turn inhibits YAP/TAZ, thereby inducing cell growth and proliferation. The endonuclease activity plays a critical role in PIWI-interacting RNA (piRNA) biogenesis during spermatogenesis. Implicated in spermatogenesis and sperm fertility in testicular germ cells, its single strand-specific nuclease activity is critical for the biogenesis/maturation of PIWI-interacting RNA (piRNA). MOV10L1 selectively binds to piRNA precursors and funnels them to the endonuclease that catalyzes the first cleavage step of piRNA processing to generate piRNA intermediate fragments that are subsequently loaded to Piwi proteins. Cleaves either DNA or RNA substrates with similar affinity, producing a 5' phosphate end, in this way it participates in the processing of primary piRNA transcripts. piRNAs provide essential protection against the activity of mobile genetic elements. piRNA-mediated transposon silencing is thus critical for maintaining genome stability, in particular in germline cells when transposons are mobilized as a consequence of wide-spread genomic demethylation. PA may act as signaling molecule in the recognition/transport of the precursor RNAs of primary piRNAs. Interacts with tesmin in testes, suggesting a role in spermatogenesis via association with its interacting partner. The chain is Mitochondrial cardiolipin hydrolase (PLD6) from Canis lupus familiaris (Dog).